A 71-amino-acid chain; its full sequence is DNA-directed RNA polymerase subunit omega (71 aa).

This sequence belongs to the RNA polymerase subunit omega family. In terms of assembly, the RNAP catalytic core consists of 2 alpha, 1 beta, 1 beta' and 1 omega subunit. When a sigma factor is associated with the core the holoenzyme is formed, which can initiate transcription.

It catalyses the reaction RNA(n) + a ribonucleoside 5'-triphosphate = RNA(n+1) + diphosphate. In terms of biological role, promotes RNA polymerase assembly. Latches the N- and C-terminal regions of the beta' subunit thereby facilitating its interaction with the beta and alpha subunits. This Alkaliphilus oremlandii (strain OhILAs) (Clostridium oremlandii (strain OhILAs)) protein is DNA-directed RNA polymerase subunit omega.